The chain runs to 362 residues: Phosphoserine aminotransferase (362 aa).

Arg-43 contacts L-glutamate. Pyridoxal 5'-phosphate-binding positions include 77-78, Trp-103, Thr-153, Asp-173, and Gln-196; that span reads AT. Lys-197 is subject to N6-(pyridoxal phosphate)lysine. 238–239 contributes to the pyridoxal 5'-phosphate binding site; the sequence is NT.

The protein belongs to the class-V pyridoxal-phosphate-dependent aminotransferase family. SerC subfamily. As to quaternary structure, homodimer. The cofactor is pyridoxal 5'-phosphate.

Its subcellular location is the cytoplasm. The catalysed reaction is O-phospho-L-serine + 2-oxoglutarate = 3-phosphooxypyruvate + L-glutamate. It catalyses the reaction 4-(phosphooxy)-L-threonine + 2-oxoglutarate = (R)-3-hydroxy-2-oxo-4-phosphooxybutanoate + L-glutamate. It functions in the pathway amino-acid biosynthesis; L-serine biosynthesis; L-serine from 3-phospho-D-glycerate: step 2/3. The protein operates within cofactor biosynthesis; pyridoxine 5'-phosphate biosynthesis; pyridoxine 5'-phosphate from D-erythrose 4-phosphate: step 3/5. Its function is as follows. Catalyzes the reversible conversion of 3-phosphohydroxypyruvate to phosphoserine and of 3-hydroxy-2-oxo-4-phosphonooxybutanoate to phosphohydroxythreonine. The polypeptide is Phosphoserine aminotransferase (Acidithiobacillus ferrooxidans (strain ATCC 23270 / DSM 14882 / CIP 104768 / NCIMB 8455) (Ferrobacillus ferrooxidans (strain ATCC 23270))).